Here is a 1880-residue protein sequence, read N- to C-terminus: Gag-Pro-Pol polyprotein (1880 aa).

A lipid anchor (N-myristoyl glycine; by host) is attached at G2. Disordered regions lie at residues 115 to 208, 323 to 376, and 446 to 469; these read HSRP…DQLN, SQGQ…THSY, and AERTRVRPPPKDGPLKIPGASPYQ. 3 stretches are compositionally biased toward polar residues: residues 117–132, 193–206, and 323–334; these read RPPSRQAPVTITTSEK, NSKTLHNSGSQDDQ, and SQGQVSSNTTGR. Positions 346 to 366 are enriched in acidic residues; sequence EEEEADSGESDSEDDEEESSE. Basic and acidic residues predominate over residues 446–459; it reads AERTRVRPPPKDGP. The region spanning 863-939 is the Peptidase A2 domain; sequence FSGILDTGAD…LPVNLWGRDI (77 aa). The active-site Protease; shared with dimeric partner is the D868. The region spanning 950-996 is the G-patch domain; that stretch reads PNDTVMTQMLSQGYLPGQGLGKNNQGITQPITITPKKDKTGLGFHQN. The Reverse transcriptase domain occupies 1044–1232; it reads LAAGHIEPTN…EPFSYLGFEL (189 aa). The Mg(2+) site is built by D1109, D1184, D1185, D1464, E1493, D1514, and D1578. Residues 1455-1586 form the RNase H type-1 domain; sequence IPQATLVFTD…ADAATQIFPI (132 aa). The segment at 1589–1630 adopts an Integrase-type zinc-finger fold; that stretch reads DPIHEATQAHTLHHLNAHTLRLLYKITREQARDIVKACKQCV. Zn(2+) is bound by residues H1598, H1602, C1626, and C1629. The Integrase catalytic domain occupies 1643-1804; sequence RGLVPNAIWQ…AADRLWHPQT (162 aa). The Mg(2+) site is built by D1654, D1711, and E1747. The segment at residues 1809–1858 is a DNA-binding region (integrase-type); sequence ATVMWRDPLTSVWKGPDPVLIWGRGSACIYDQKEDGPRWLPERLIRHINN. The segment at 1859 to 1880 is disordered; that stretch reads QTAPLCDRPSNPNTAPGPKGSP.

Homodimer. As to quaternary structure, interacts with the G-patch peptide. In terms of assembly, interacts with the reverse transcriptase/ribonuclease H. Homotrimer. It depends on Mg(2+) as a cofactor. In terms of processing, myristoylated. Myristoylation of the matrix (MA) domain mediates the transport and binding of Gag polyproteins to the host plasma membrane and is required for the assembly of viral particles. Specific enzymatic cleavages in vivo yield mature proteins. Post-translationally, released by autocatalytic processing. The protease can undergo further autoprocessing to yield 2 shorter but enzymatically active forms of 12 kDa and 13 kDa.

It is found in the virion. The enzyme catalyses DNA(n) + a 2'-deoxyribonucleoside 5'-triphosphate = DNA(n+1) + diphosphate. It carries out the reaction Endonucleolytic cleavage to 5'-phosphomonoester.. It catalyses the reaction dUTP + H2O = dUMP + diphosphate + H(+). Functionally, matrix protein. In terms of biological role, capsid protein. Its function is as follows. Matrix protein p10: Matrix protein. Nucleocapsid protein p14: Nucleocapsid protein. Functionally, capsid protein p27: capsid protein. In terms of biological role, the aspartyl protease mediates proteolytic cleavages of Gag and Gag-Pol polyproteins during or shortly after the release of the virion from the plasma membrane. Cleavages take place as an ordered, step-wise cascade to yield mature proteins. This process is called maturation. Displays maximal activity during the budding process just prior to particle release from the cell. Its function is as follows. Enhances the activity of the reverse transcriptase. May be part of the mature RT. RT is a multifunctional enzyme that converts the viral dimeric RNA genome into dsDNA in the cytoplasm, shortly after virus entry into the cell. This enzyme displays a DNA polymerase activity that can copy either DNA or RNA templates, and a ribonuclease H (RNase H) activity that cleaves the RNA strand of RNA-DNA heteroduplexes in a partially processive 3' to 5' endonucleasic mode. Conversion of viral genomic RNA into dsDNA requires many steps. A tRNA binds to the primer-binding site (PBS) situated at the 5' end of the viral RNA. RT uses the 3' end of the tRNA primer to perfom a short round of RNA-dependent minus-strand DNA synthesis. The reading proceeds through the U5 region and ends after the repeated (R) region which is present at both ends of viral RNA. The portion of the RNA-DNA heteroduplex is digested by the RNase H, resulting in a ssDNA product attached to the tRNA primer. This ssDNA/tRNA hybridizes with the identical R region situated at the 3' end of viral RNA. This template exchange, known as minus-strand DNA strong stop transfer, can be either intra- or intermolecular. RT uses the 3' end of this newly synthesized short ssDNA to perfom the RNA-dependent minus-strand DNA synthesis of the whole template. RNase H digests the RNA template except for a polypurine tract (PPT) situated at the 5' end of the genome. It is not clear if both polymerase and RNase H activities are simultaneous. RNase H probably can proceed both in a polymerase-dependent (RNA cut into small fragments by the same RT performing DNA synthesis) and a polymerase-independent mode (cleavage of remaining RNA fragments by free RTs). Secondly, RT performs DNA-directed plus-strand DNA synthesis using the PPT that has not been removed by RNase H as primers. PPT and tRNA primers are then removed by RNase H. The 3' and 5' ssDNA PBS regions hybridize to form a circular dsDNA intermediate. Strand displacement synthesis by RT to the PBS and PPT ends produces a blunt ended, linear dsDNA copy of the viral genome that includes long terminal repeats (LTRs) at both ends. Functionally, catalyzes viral DNA integration into the host chromosome, by performing a series of DNA cutting and joining reactions. The chain is Gag-Pro-Pol polyprotein (pol) from Mammalia (SMRV-H).